A 121-amino-acid polypeptide reads, in one-letter code: Phosphoribosyl-AMP cyclohydrolase (121 aa).

D76 serves as a coordination point for Mg(2+). Zn(2+) is bound at residue C77. Residues D78 and D80 each coordinate Mg(2+). Zn(2+)-binding residues include C93 and C100.

It belongs to the PRA-CH family. Homodimer. It depends on Mg(2+) as a cofactor. The cofactor is Zn(2+).

It is found in the cytoplasm. It catalyses the reaction 1-(5-phospho-beta-D-ribosyl)-5'-AMP + H2O = 1-(5-phospho-beta-D-ribosyl)-5-[(5-phospho-beta-D-ribosylamino)methylideneamino]imidazole-4-carboxamide. The protein operates within amino-acid biosynthesis; L-histidine biosynthesis; L-histidine from 5-phospho-alpha-D-ribose 1-diphosphate: step 3/9. Its function is as follows. Catalyzes the hydrolysis of the adenine ring of phosphoribosyl-AMP. This Paracoccus denitrificans (strain Pd 1222) protein is Phosphoribosyl-AMP cyclohydrolase.